The following is a 243-amino-acid chain: Uridylate kinase (243 aa).

Position 18–21 (18–21 (KLGG)) interacts with ATP. Residue Gly59 coordinates UMP. Residues Gly60 and Arg64 each contribute to the ATP site. Residues Asp79 and 140-147 (MGMPYFST) contribute to the UMP site. Tyr173 and Asp176 together coordinate ATP.

This sequence belongs to the UMP kinase family. In terms of assembly, homohexamer.

It localises to the cytoplasm. It carries out the reaction UMP + ATP = UDP + ADP. The protein operates within pyrimidine metabolism; CTP biosynthesis via de novo pathway; UDP from UMP (UMPK route): step 1/1. With respect to regulation, inhibited by UTP. Functionally, catalyzes the reversible phosphorylation of UMP to UDP. This is Uridylate kinase from Corynebacterium diphtheriae (strain ATCC 700971 / NCTC 13129 / Biotype gravis).